The primary structure comprises 315 residues: Methionyl-tRNA formyltransferase (315 aa).

Serine 111 to proline 114 contributes to the (6S)-5,6,7,8-tetrahydrofolate binding site.

It belongs to the Fmt family.

The catalysed reaction is L-methionyl-tRNA(fMet) + (6R)-10-formyltetrahydrofolate = N-formyl-L-methionyl-tRNA(fMet) + (6S)-5,6,7,8-tetrahydrofolate + H(+). Attaches a formyl group to the free amino group of methionyl-tRNA(fMet). The formyl group appears to play a dual role in the initiator identity of N-formylmethionyl-tRNA by promoting its recognition by IF2 and preventing the misappropriation of this tRNA by the elongation apparatus. The protein is Methionyl-tRNA formyltransferase of Flavobacterium johnsoniae (strain ATCC 17061 / DSM 2064 / JCM 8514 / BCRC 14874 / CCUG 350202 / NBRC 14942 / NCIMB 11054 / UW101) (Cytophaga johnsonae).